The chain runs to 409 residues: uncharacterized protein (409 aa).

Helical transmembrane passes span 3-23 (IIVK…PTTE), 43-63 (ITQI…LSLG), 73-93 (PIVL…IFSV), 95-115 (IEML…GSVI), 135-155 (ILSP…GYII), 162-182 (YVFV…YKIL), 209-229 (ILWL…GFFI), 248-268 (KLAF…GYLI), 283-303 (FIFS…LEFI), 309-329 (LAIS…SLLI), 346-366 (TAGS…TYCV), and 379-399 (LLCL…CILY).

This sequence belongs to the major facilitator superfamily. Bcr/CmlA family.

It localises to the cell inner membrane. This is an uncharacterized protein from Rickettsia typhi (strain ATCC VR-144 / Wilmington).